Reading from the N-terminus, the 595-residue chain is MPAERRRRAVTLASRLVAAAISLTAAAGAFFLFLQFGSTDGLDSMDITRSVLILVSTSWLGWGAAHAVLGLFSRPQRPANVSPDAPISTRTVILVPVYNEDPVATFSRIAAMDASLAATPWRDLFHFAILSDTRDEAIAARERFWFLRLLRERDAEGRIFYRRRAVNRGRKAGNIEDFIQKSGSAYPFAVILDADSLMEGETLVDMVRRMEAEPRLGLLQTLPVVTKARARFGRSMQFSAALHAPVFARGLAMMQGRTGPFWGHNAIVRVQAFAESCGLPELSGPPPFGGHVMSHDYVEAALLARAGWIVRFDDDIRGSYEEGPENLVDHAKRDRRWCQGNLQHGRILFAPGLCGWNRFVFLQGIMAYIAPLFWLGFIMASIAAPFFAPPLDYFPVPYWPFPVFPSDETWKAIGLAVGIFGLLLLPKLMIAIEAIVTGRAAGFGGAGRVLVSTLAELVFSSIIAPILMAFQTRSVLQVLLGRDGGWPTNNRGDGSLSVAQAWSASHWIVTWGLIGIGATYYFAPGLVPWLLPVALPMIFSPLVIAVTSKRSRSALFTMPLEVAPTPVLLAHDAILADWERSPAPEAVPALAVSHA.

Transmembrane regions (helical) follow at residues 13-35, 50-72, 365-387, 414-436, 449-471, and 526-548; these read ASRL…LFLQ, SVLI…LGLF, IMAY…APFF, GLAV…EAIV, VLVS…MAFQ, and LVPW…AVTS.

The protein belongs to the glycosyltransferase 2 family. OpgH subfamily.

It localises to the cell inner membrane. It functions in the pathway glycan metabolism; osmoregulated periplasmic glucan (OPG) biosynthesis. Involved in the biosynthesis of osmoregulated periplasmic glucans (OPGs). This Cereibacter sphaeroides (strain ATCC 17023 / DSM 158 / JCM 6121 / CCUG 31486 / LMG 2827 / NBRC 12203 / NCIMB 8253 / ATH 2.4.1.) (Rhodobacter sphaeroides) protein is Glucans biosynthesis glucosyltransferase H (opgH).